Here is a 155-residue protein sequence, read N- to C-terminus: Putative pre-16S rRNA nuclease (155 aa).

It belongs to the YqgF nuclease family.

It localises to the cytoplasm. In terms of biological role, could be a nuclease involved in processing of the 5'-end of pre-16S rRNA. In Xylella fastidiosa (strain M23), this protein is Putative pre-16S rRNA nuclease.